The sequence spans 180 residues: Superoxide dismutase [Cu-Zn] (180 aa).

Positions 1-19 (MFMNLLTQVSNAIFPQVEA) are cleaved as a signal peptide. Residues His68, His70, and His85 each coordinate Cu cation. Cys79 and Cys171 are disulfide-bonded. Residues His85, His93, His102, and Asp105 each coordinate Zn(2+). Cu cation is bound at residue His142.

It belongs to the Cu-Zn superoxide dismutase family. As to quaternary structure, homodimer. It depends on Cu cation as a cofactor. Requires Zn(2+) as cofactor.

Its subcellular location is the cytoplasm. It catalyses the reaction 2 superoxide + 2 H(+) = H2O2 + O2. The insertion of copper which activates the protein requires glutathione. This is independent of copper chaperone for SOD1 (CCS), which activates orthologs. In terms of biological role, protects cells against oxidative stress by converting superoxide radicals to hydrogen peroxide. Required for normal brood size. May be involved in regulating mpk-1 phosphorylation downstream of phosphatase ptp-2 during oocyte maturation. In Caenorhabditis elegans, this protein is Superoxide dismutase [Cu-Zn] (sod-1).